Consider the following 493-residue polypeptide: Glycylpeptide N-tetradecanoyltransferase (493 aa).

A tetradecanoyl-CoA-binding site is contributed by 45–48; sequence HKFW. The tract at residues 53–73 is disordered; it reads VPQITGSGAPAPIEEGPIDDP. Residues 182–184 and 190–194 each bind tetradecanoyl-CoA; these read LCV and SKRLA. Leu493 functions as the Proton acceptor; via carboxylate in the catalytic mechanism.

This sequence belongs to the NMT family. As to quaternary structure, monomer.

The protein localises to the cytoplasm. The enzyme catalyses N-terminal glycyl-[protein] + tetradecanoyl-CoA = N-tetradecanoylglycyl-[protein] + CoA + H(+). In terms of biological role, adds a myristoyl group to the N-terminal glycine residue of certain cellular proteins. The protein is Glycylpeptide N-tetradecanoyltransferase of Cryptococcus neoformans var. neoformans serotype D (strain B-3501A) (Filobasidiella neoformans).